Reading from the N-terminus, the 501-residue chain is DEAD-box ATP-dependent RNA helicase 20 (501 aa).

Basic and acidic residues-rich tracts occupy residues 1–20 and 38–53; these read MSRY…RRSD and SKKD…KLDL. The interval 1–53 is disordered; sequence MSRYDSRTGDSTSYRDRRSDSGFGGTSSYGSSGSHTSSKKDNDGNESPRKLDL. The Q motif signature appears at 99–127; it reads KSFRDVGFPDYVLEEVKKAGFTEPTPIQS. One can recognise a Helicase ATP-binding domain in the interval 130-305; that stretch reads WPMAMKGRDL…KKFLYNPYKV (176 aa). 143-150 contributes to the ATP binding site; sequence AETGSGKT. The DEAD box signature appears at 253–256; sequence DEAD. A Helicase C-terminal domain is found at 333-478; it reads KLVKLLEDIM…KVSPELASMG (146 aa). The tract at residues 473–501 is disordered; the sequence is ELASMGRSTAPPPPGLGGFRDRGSRRGWS. The span at 491–501 shows a compositional bias: basic and acidic residues; sequence FRDRGSRRGWS.

The protein belongs to the DEAD box helicase family. DDX5/DBP2 subfamily.

The protein resides in the nucleus. It catalyses the reaction ATP + H2O = ADP + phosphate + H(+). Its function is as follows. ATP-dependent RNA helicase involved nonsense-mediated mRNA decay and ribosome biogenesis through rRNA processing. The sequence is that of DEAD-box ATP-dependent RNA helicase 20 (RH20) from Arabidopsis thaliana (Mouse-ear cress).